Here is a 66-residue protein sequence, read N- to C-terminus: MRGKVKWFDSKKGYGFITKDEGGDVFVHWSAIEMEGFKTLKEGQVVEFEIQEGKKGPQAAHVKVVE.

Residues 3-62 (GKVKWFDSKKGYGFITKDEGGDVFVHWSAIEMEGFKTLKEGQVVEFEIQEGKKGPQAAHV) form the CSD domain.

In terms of assembly, monomer.

It is found in the cytoplasm. In Thermotoga maritima (strain ATCC 43589 / DSM 3109 / JCM 10099 / NBRC 100826 / MSB8), this protein is Cold shock-like protein (csp).